The sequence spans 970 residues: MLRLSLPPNVSMGFRLVALVALLFSHVDHITADTEAETGGNETTECTGSYYCKKGVILPIWEPQDPSFGDKIARATVYFVAMVYMFLGVSIIADRFMSSIEVITSQEKEITIKKPNGETTKTTVRIWNETVSNLTLMALGSSAPEILLSVIEVCGHNFTAGDLGPSTIVGSAAFNMFIIIALCVYVVPDGETRKIKHLRVFFVTAAWSIFAYTWLYIILSVSSPGVVEVWEGLLTFFFFPICVVFAWVADRRLLFYKYVYKRYRAGKQRGMIIEHEGDRPASKTEIEMDGKVVNSHVDNFLDGALVLEVDERDQDDEEARREMARILKELKQKHPEKEIEQLIELANYQVLSQQQKSRAFYRIQATRLMTGAGNILKRHAADQARKAVSMHEVNMEMAENDPVSKIFFEQGTYQCLENCGTVALTIMRRGGDLSTTVFVDFRTEDGTANAASDYEFTEGTVIFKPGETQKEIRVGIIDDDIFEEDENFLVHLSNVRVSSDVSEDGILESNHASSIACLGSPSTATITIFDDDHAGIFTFEEPVTHVSESIGIMEVKVLRTSGARGNVIIPYKTIEGTARGGGEDFEDTCGEPEFQNDEIVKTISVKVIDDEEYEKNKTFFIEIGEPRLVEMSEKKALLLNELGGFTLTGKEMYGQPIFRKVHARDHPIPSTVITISEEYDDKQPLTSKEEEERRIAEMGRPILGEHTKLEVIIQESYEFKSTVDKLIKKTNLALVVGTNSWREQFIEAITVSAGEDDDDDECGEEKLPSCFDYVMHFLTVFWKVLFAFVPPTEYWNGWACFIVSILMIGLLTAFIGDLASHFGCTIGLKDSVTAVVFVALGTSVPDTFASKVAATQDQYADASIGNVTGSNAVNVFLGIGVAWSIAAIYHAANGEQFKVSPGTLAFSVTLFTIFAFINVGVLLYRRRPEIGGELGGPRTAKLLTSSLFVLLWLLYIFFSSLEAYCHIKGF.

The N-terminal stretch at 1-32 is a signal peptide; sequence MLRLSLPPNVSMGFRLVALVALLFSHVDHITA. The Extracellular portion of the chain corresponds to 33-71; sequence DTEAETGGNETTECTGSYYCKKGVILPIWEPQDPSFGDK. Asn-41 carries an N-linked (GlcNAc...) asparagine glycan. A helical membrane pass occupies residues 72–92; the sequence is IARATVYFVAMVYMFLGVSII. The Cytoplasmic segment spans residues 93-133; that stretch reads ADRFMSSIEVITSQEKEITIKKPNGETTKTTVRIWNETVSN. The chain crosses the membrane as a helical span at residues 134–154; sequence LTLMALGSSAPEILLSVIEVC. An Alpha-1 repeat occupies 138 to 178; the sequence is ALGSSAPEILLSVIEVCGHNFTAGDLGPSTIVGSAAFNMFI. Topologically, residues 155–167 are extracellular; sequence GHNFTAGDLGPST. N-linked (GlcNAc...) asparagine glycosylation occurs at Asn-157. Residues 168 to 188 traverse the membrane as a helical segment; sequence IVGSAAFNMFIIIALCVYVVP. At 189 to 201 the chain is on the cytoplasmic side; sequence DGETRKIKHLRVF. The helical transmembrane segment at 202-222 threads the bilayer; the sequence is FVTAAWSIFAYTWLYIILSVS. Residues 223 to 228 lie on the Extracellular side of the membrane; it reads SPGVVE. The helical transmembrane segment at 229–249 threads the bilayer; sequence VWEGLLTFFFFPICVVFAWVA. The Cytoplasmic portion of the chain corresponds to 250–797; sequence DRRLLFYKYV…FVPPTEYWNG (548 aa). The putative calmodulin-binding region stretch occupies residues 251-270; the sequence is RRLLFYKYVYKRYRAGKQRG. Ser-282 and Ser-389 each carry phosphoserine. Calx-beta domains are found at residues 393–493 and 524–624; these read VNME…VHLS and ATIT…IEIG. Ca(2+) is bound by residues Glu-417, Asp-453, Asp-478, Asp-479, Ile-481, Glu-483, Glu-486, Asp-530, Asp-531, Asp-532, Glu-548, Asp-584, Asp-610, Glu-611, Glu-612, and Glu-715. A helical transmembrane segment spans residues 798–818; sequence WACFIVSILMIGLLTAFIGDL. Topologically, residues 819 to 821 are extracellular; it reads ASH. A helical transmembrane segment spans residues 822–842; sequence FGCTIGLKDSVTAVVFVALGT. Residues 839-875 form an Alpha-2 repeat; the sequence is ALGTSVPDTFASKVAATQDQYADASIGNVTGSNAVNV. Over 843–871 the chain is Cytoplasmic; that stretch reads SVPDTFASKVAATQDQYADASIGNVTGSN. A helical membrane pass occupies residues 872-892; that stretch reads AVNVFLGIGVAWSIAAIYHAA. Over 893–903 the chain is Extracellular; the sequence is NGEQFKVSPGT. The chain crosses the membrane as a helical span at residues 904-924; the sequence is LAFSVTLFTIFAFINVGVLLY. Topologically, residues 925-941 are cytoplasmic; sequence RRRPEIGGELGGPRTAK. The chain crosses the membrane as a helical span at residues 942 to 962; the sequence is LLTSSLFVLLWLLYIFFSSLE. At 963–970 the chain is on the extracellular side; the sequence is AYCHIKGF.

Belongs to the Ca(2+):cation antiporter (CaCA) (TC 2.A.19) family. SLC8 subfamily. Detected in heart, kidney and brain (at protein level).

It localises to the cell membrane. It catalyses the reaction Ca(2+)(in) + 3 Na(+)(out) = Ca(2+)(out) + 3 Na(+)(in). Activated by micromolar levels of Ca(2+). In terms of biological role, mediates the exchange of one Ca(2+) ion against three to four Na(+) ions across the cell membrane, and thereby contributes to the regulation of cytoplasmic Ca(2+) levels and Ca(2+)-dependent cellular processes. Contributes to Ca(2+) transport during excitation-contraction coupling in muscle. In a first phase, voltage-gated channels mediate the rapid increase of cytoplasmic Ca(2+) levels due to release of Ca(2+) stores from the endoplasmic reticulum. SLC8A1 mediates the export of Ca(2+) from the cell during the next phase, so that cytoplasmic Ca(2+) levels rapidly return to baseline. Required for normal embryonic heart development and the onset of heart contractions. This Mus musculus (Mouse) protein is Sodium/calcium exchanger 1 (Slc8a1).